A 339-amino-acid polypeptide reads, in one-letter code: 5-dehydro-2-deoxygluconokinase (339 aa).

It belongs to the carbohydrate kinase PfkB family.

The catalysed reaction is 5-dehydro-2-deoxy-D-gluconate + ATP = 6-phospho-5-dehydro-2-deoxy-D-gluconate + ADP + H(+). The protein operates within polyol metabolism; myo-inositol degradation into acetyl-CoA; acetyl-CoA from myo-inositol: step 5/7. Functionally, catalyzes the phosphorylation of 5-dehydro-2-deoxy-D-gluconate (2-deoxy-5-keto-D-gluconate or DKG) to 6-phospho-5-dehydro-2-deoxy-D-gluconate (DKGP). The sequence is that of 5-dehydro-2-deoxygluconokinase from Clostridium botulinum (strain Eklund 17B / Type B).